A 564-amino-acid chain; its full sequence is Septin-9 (564 aa).

An N-acetylmethionine modification is found at M1. Position 12 is a phosphoserine (S12). T24 and T31 each carry phosphothreonine. 2 disordered regions span residues 38–165 (VASS…PVTD) and 178–224 (PAEA…DSEV). K44 carries the post-translational modification N6-acetyllysine. S64, S67, and S71 each carry phosphoserine. A compositionally biased stretch (polar residues) spans 95–109 (DISSKQVESTASTPG). The span at 116-134 (KRAEVLGHKTPEPVPRRTE) shows a compositional bias: basic and acidic residues. T125 carries the phosphothreonine modification. The span at 190-203 (TLENSEAPMSQLQS) shows a compositional bias: polar residues. Y258 carries the post-translational modification Phosphotyrosine. A Septin-type G domain is found at 275-546 (QGFEFNIMVV…EAYRVKRLNE (272 aa)). The G1 motif stretch occupies residues 285 to 292 (GQSGLGKS). 285-292 (GQSGLGKS) contributes to the GTP binding site. S307 and S312 each carry phosphoserine. GTP is bound by residues T319, G345, 425-433 (KADTLTLEE), G480, and R495. The G3 motif stretch occupies residues 342-345 (DTPG). Residues 424 to 427 (AKAD) form a G4 motif region.

This sequence belongs to the TRAFAC class TrmE-Era-EngA-EngB-Septin-like GTPase superfamily. Septin GTPase family. Septins polymerize into heterooligomeric protein complexes that form filaments, and associate with cellular membranes, actin filaments, and microtubules. GTPase activity is required for filament formation. Interacts with SEPTIN2, SEPTIN6, SEPTIN7, SEPTIN11 and SEPTIN14. Interacts with RTKN and ARHGEF18. As to expression, expressed in the brain, mainly in the perikarya and processes of astrocytes in the cerebellum, dentate gyrus and corpus callosum (at protein level). In the sciatic nerve, highly expressed in Schwann cells (at protein level). Isoforms are differentially expressed in testes, kidney, liver, heart, spleen and brain. Undetectable in skeletal muscle.

The protein resides in the cytoplasm. The protein localises to the cytoskeleton. Filament-forming cytoskeletal GTPase. May play a role in cytokinesis (Potential). This is Septin-9 from Rattus norvegicus (Rat).